Here is a 275-residue protein sequence, read N- to C-terminus: Beta-lactamase OXA-2 (275 aa).

The N-terminal stretch at 1–21 (MAIRIFAILFSIFSLATFAHA) is a signal peptide. The active-site Acyl-ester intermediate is Ser-72. Lys-75 bears the N6-carboxylysine mark. Residue 210 to 212 (KTG) participates in substrate binding.

It belongs to the class-D beta-lactamase family.

The enzyme catalyses a beta-lactam + H2O = a substituted beta-amino acid. This is an oxacillin-hydrolyzing beta-lactamase. The sequence is that of Beta-lactamase OXA-2 (bla) from Escherichia coli.